A 1241-amino-acid polypeptide reads, in one-letter code: Phosphorylase b kinase regulatory subunit alpha, skeletal muscle isoform (1241 aa).

A phosphoserine mark is found at Ser-629, Ser-730, Ser-736, Ser-739, Ser-759, Ser-812, Ser-973, Ser-982, and Ser-986. The interval 811–841 (LSELYVKVGEIRHWGLIRYISGILRKKVEAL) is calmodulin-binding. Residue Ser-1008 is modified to Phosphoserine; by autocatalysis. Phosphoserine; by PKA is present on Ser-1019. Phosphoserine is present on residues Ser-1021 and Ser-1024. The interval 1064–1104 (SKDSRQGQWQRRRRLDGALNRVPIGFYQKVWKILQKCHGLS) is calmodulin-binding. Residue Ser-1131 is modified to Phosphoserine. A lipid anchor (S-farnesyl cysteine) is attached at Cys-1238.

It belongs to the phosphorylase b kinase regulatory chain family. Hexadecamer of 4 heterotetramers, each composed of alpha, beta, gamma, and delta subunits. Alpha (PHKA1 or PHKA2) and beta (PHKB) are regulatory subunits, gamma (PHKG1 or PHKG2) is the catalytic subunit, and delta is calmodulin. In terms of processing, although the final Cys may be farnesylated, the terminal tripeptide is probably not removed, and the C-terminus is not methylated. As to expression, both isoforms are expressed in muscle.

Its subcellular location is the cell membrane. It functions in the pathway glycan biosynthesis; glycogen metabolism. With respect to regulation, by phosphorylation of various serine residues and by calcium. Phosphorylase b kinase catalyzes the phosphorylation of serine in certain substrates, including troponin I. The alpha chain may bind calmodulin. In Mus musculus (Mouse), this protein is Phosphorylase b kinase regulatory subunit alpha, skeletal muscle isoform (Phka1).